The primary structure comprises 151 residues: Macrodomain Ter protein (151 aa).

The protein belongs to the MatP family. As to quaternary structure, homodimer.

It is found in the cytoplasm. Required for spatial organization of the terminus region of the chromosome (Ter macrodomain) during the cell cycle. Prevents early segregation of duplicated Ter macrodomains during cell division. Binds specifically to matS, which is a 13 bp signature motif repeated within the Ter macrodomain. The polypeptide is Macrodomain Ter protein (Yersinia pseudotuberculosis serotype IB (strain PB1/+)).